The primary structure comprises 200 residues: Non-specific lipid transfer protein GPI-anchored 16 (200 aa).

The N-terminal stretch at 1 to 20 (MEGLTLIVVMMSSFMLGGQG) is a signal peptide. 4 disulfides stabilise this stretch: Cys-27–Cys-72, Cys-38–Cys-56, Cys-57–Cys-98, and Cys-70–Cys-107. A glycan (N-linked (GlcNAc...) asparagine) is linked at Asn-87. Residues 134-182 (SPGASKAAGTTPTQAPAPDTPADGPTGPTTKSGIRPVDQPMQPTGLAQS) are disordered. A compositionally biased stretch (low complexity) spans 140–163 (AAGTTPTQAPAPDTPADGPTGPTT). Thr-177 carries the GPI-anchor amidated threonine lipid modification. A propeptide spans 178–200 (GLAQSSTSPFLPLLFISLILLNL) (removed in mature form).

Belongs to the plant LTP family. As to expression, expressed in seedlings, preferentially in hypocotyls and roots. Also observed in siliques.

Its subcellular location is the cell membrane. Essential protein involved in female gametophyte development. Probable lipid transfer protein. In Arabidopsis thaliana (Mouse-ear cress), this protein is Non-specific lipid transfer protein GPI-anchored 16.